A 607-amino-acid polypeptide reads, in one-letter code: Large ribosomal subunit assembly factor BipA (607 aa).

A tr-type G domain is found at 3 to 198; sequence EKLRNIAIIA…AIVDHVPAPD (196 aa). GTP contacts are provided by residues 15–20 and 128–131; these read DHGKTT and NKVD.

The protein belongs to the TRAFAC class translation factor GTPase superfamily. Classic translation factor GTPase family. BipA subfamily. In terms of assembly, monomer.

It is found in the cytoplasm. The enzyme catalyses GTP + H2O = GDP + phosphate + H(+). A 50S ribosomal subunit assembly protein with GTPase activity, required for 50S subunit assembly at low temperatures, may also play a role in translation. Binds GTP and analogs. Binds the 70S ribosome between the 30S and 50S subunits, in a similar position as ribosome-bound EF-G; it contacts a number of ribosomal proteins, both rRNAs and the A-site tRNA. This is Large ribosomal subunit assembly factor BipA from Shigella flexneri.